The sequence spans 364 residues: Biotin synthase (364 aa).

The interval 14–36 is disordered; the sequence is DTIPPGTETPYASPSHARTEEAP. The 239-residue stretch at 70–308 folds into the Radical SAM core domain; sequence RKGPLATTCG…QRDILVCGGR (239 aa). Residues C88, C92, and C95 each contribute to the [4Fe-4S] cluster site. Residues C164 and C233 each coordinate [2Fe-2S] cluster.

This sequence belongs to the radical SAM superfamily. Biotin synthase family. Homodimer. Requires [4Fe-4S] cluster as cofactor. [2Fe-2S] cluster is required as a cofactor.

It carries out the reaction (4R,5S)-dethiobiotin + (sulfur carrier)-SH + 2 reduced [2Fe-2S]-[ferredoxin] + 2 S-adenosyl-L-methionine = (sulfur carrier)-H + biotin + 2 5'-deoxyadenosine + 2 L-methionine + 2 oxidized [2Fe-2S]-[ferredoxin]. It functions in the pathway cofactor biosynthesis; biotin biosynthesis; biotin from 7,8-diaminononanoate: step 2/2. Its function is as follows. Catalyzes the conversion of dethiobiotin (DTB) to biotin by the insertion of a sulfur atom into dethiobiotin via a radical-based mechanism. This is Biotin synthase from Nitratidesulfovibrio vulgaris (strain DSM 19637 / Miyazaki F) (Desulfovibrio vulgaris).